The following is a 67-amino-acid chain: MPQLDTSTWFTTILSTSFSIIHRLQLKLTTHIFSPNPTPKDLKTLKHHNPWDKKWTKSYLPLSLHQH.

Residues 8-24 (TWFTTILSTSFSIIHRL) traverse the membrane as a helical segment. K54 bears the N6-acetyllysine; alternate mark. The residue at position 54 (K54) is an N6-succinyllysine; alternate. The residue at position 57 (K57) is an N6-acetyllysine.

Belongs to the ATPase protein 8 family. In terms of assembly, component of the ATP synthase complex composed at least of ATP5F1A/subunit alpha, ATP5F1B/subunit beta, ATP5MC1/subunit c (homooctomer), MT-ATP6/subunit a, MT-ATP8/subunit 8, ATP5ME/subunit e, ATP5MF/subunit f, ATP5MG/subunit g, ATP5MK/subunit k, ATP5MJ/subunit j, ATP5F1C/subunit gamma, ATP5F1D/subunit delta, ATP5F1E/subunit epsilon, ATP5PF/subunit F6, ATP5PB/subunit b, ATP5PD/subunit d, ATP5PO/subunit OSCP. ATP synthase complex consists of a soluble F(1) head domain (subunits alpha(3) and beta(3)) - the catalytic core - and a membrane F(0) domain - the membrane proton channel (subunits c, a, 8, e, f, g, k and j). These two domains are linked by a central stalk (subunits gamma, delta, and epsilon) rotating inside the F1 region and a stationary peripheral stalk (subunits F6, b, d, and OSCP). Interacts with PRICKLE3.

The protein resides in the mitochondrion membrane. Subunit 8, of the mitochondrial membrane ATP synthase complex (F(1)F(0) ATP synthase or Complex V) that produces ATP from ADP in the presence of a proton gradient across the membrane which is generated by electron transport complexes of the respiratory chain. ATP synthase complex consist of a soluble F(1) head domain - the catalytic core - and a membrane F(1) domain - the membrane proton channel. These two domains are linked by a central stalk rotating inside the F(1) region and a stationary peripheral stalk. During catalysis, ATP synthesis in the catalytic domain of F(1) is coupled via a rotary mechanism of the central stalk subunits to proton translocation. In vivo, can only synthesize ATP although its ATP hydrolase activity can be activated artificially in vitro. Part of the complex F(0) domain. This Glis glis (Fat dormouse) protein is ATP synthase F(0) complex subunit 8.